The sequence spans 580 residues: Kelch-like protein 38 (580 aa).

The 68-residue stretch at 34-101 (TDVSICSGAC…VYTGEVHISA (68 aa)) folds into the BTB domain. The 102-residue stretch at 136–237 (CLGLVRLAEI…HPAFFHHFIA (102 aa)) folds into the BACK domain. 6 Kelch repeats span residues 284–331 (FLLL…TLHR), 333–382 (VYVL…THRN), 383–430 (FIFS…VKDQ), 432–478 (LYLF…VLGE), 479–520 (KIII…VMGN), and 522–572 (LYVT…TLQC).

This chain is Kelch-like protein 38 (Klhl38), found in Rattus norvegicus (Rat).